Here is a 125-residue protein sequence, read N- to C-terminus: Small ribosomal subunit protein uS13 (125 aa).

Belongs to the universal ribosomal protein uS13 family. In terms of assembly, part of the 30S ribosomal subunit. Forms a loose heterodimer with protein S19. Forms two bridges to the 50S subunit in the 70S ribosome.

Its function is as follows. Located at the top of the head of the 30S subunit, it contacts several helices of the 16S rRNA. In the 70S ribosome it contacts the 23S rRNA (bridge B1a) and protein L5 of the 50S subunit (bridge B1b), connecting the 2 subunits; these bridges are implicated in subunit movement. Contacts the tRNAs in the A and P-sites. This chain is Small ribosomal subunit protein uS13, found in Granulibacter bethesdensis (strain ATCC BAA-1260 / CGDNIH1).